The chain runs to 436 residues: Methionine aminopeptidase 2 (436 aa).

The tract at residues 1 to 61 (MSEIQPKTEV…KKKKAAPVAS (61 aa)) is disordered. A compositionally biased stretch (acidic residues) spans 16-26 (EEEEESDDEED). Positions 44–56 (KKKKKKNKKKKKA) are enriched in basic residues. Substrate is bound at residue H191. Residues D211, D222, and H291 each contribute to the a divalent metal cation site. Residue H299 coordinates substrate. 2 residues coordinate a divalent metal cation: E324 and E417.

Belongs to the peptidase M24A family. Methionine aminopeptidase eukaryotic type 2 subfamily. The cofactor is Co(2+). Zn(2+) serves as cofactor. Mn(2+) is required as a cofactor. Requires Fe(2+) as cofactor.

Its subcellular location is the cytoplasm. The enzyme catalyses Release of N-terminal amino acids, preferentially methionine, from peptides and arylamides.. In terms of biological role, cotranslationally removes the N-terminal methionine from nascent proteins. The N-terminal methionine is often cleaved when the second residue in the primary sequence is small and uncharged (Met-Ala-, Cys, Gly, Pro, Ser, Thr, or Val). The protein is Methionine aminopeptidase 2 (metap2) of Dictyostelium discoideum (Social amoeba).